Consider the following 317-residue polypeptide: Olfactory receptor 2F2 (317 aa).

The Extracellular portion of the chain corresponds to 1–25 (MEIDNQTWVREFILLGLSSDWCTQI). A glycan (N-linked (GlcNAc...) asparagine) is linked at N5. Residues 26–49 (SLFSLFLVTYLMTVLGNCLIVLLI) traverse the membrane as a helical segment. At 50–57 (RLDSRLHT) the chain is on the cytoplasmic side. Residues 58–79 (PMYFFLTNLSLVDVSYATSVVP) traverse the membrane as a helical segment. The Extracellular segment spans residues 80–100 (QLLAHFLAEHKAIPFQSCAAQ). C97 and C189 are oxidised to a cystine. Residues 101-120 (LFFSLALGGIEFVLLAVMAY) form a helical membrane-spanning segment. Over 121 to 139 (DRHVAVSDRLRYSAIMHGG) the chain is Cytoplasmic. A helical membrane pass occupies residues 140-158 (LCARLAITSWVSGSINSLV). Topologically, residues 159-195 (QTAITFQLPMCTNKFIDHISCELLAVVRLACVDTSSN) are extracellular. Residues 196-219 (EAAIMVSSIVLLMTPFCLVLLSYI) form a helical membrane-spanning segment. At 220–236 (RIISTILKIQSREGRKK) the chain is on the cytoplasmic side. A helical transmembrane segment spans residues 237 to 259 (AFHTCASHLTVVALCYGTTIFTY). The Extracellular portion of the chain corresponds to 260-272 (IQPHSGPSVLQEK). Residues 273 to 292 (LISVFYAIVMPLLNPVIYSL) form a helical membrane-spanning segment. The Cytoplasmic portion of the chain corresponds to 293–317 (RNKEVKGAWHKLLEKFSGLTSKLGT).

Belongs to the G-protein coupled receptor 1 family.

It localises to the cell membrane. In terms of biological role, odorant receptor. The chain is Olfactory receptor 2F2 (OR2F2) from Homo sapiens (Human).